Consider the following 207-residue polypeptide: Adenine phosphoribosyltransferase (207 aa).

A disordered region spans residues 1–33; sequence MRPAKPPQSKERKRSKSLTSADHDNSPQRAETA.

Belongs to the purine/pyrimidine phosphoribosyltransferase family. As to quaternary structure, homodimer.

It is found in the cytoplasm. It carries out the reaction AMP + diphosphate = 5-phospho-alpha-D-ribose 1-diphosphate + adenine. It participates in purine metabolism; AMP biosynthesis via salvage pathway; AMP from adenine: step 1/1. In terms of biological role, catalyzes a salvage reaction resulting in the formation of AMP, that is energically less costly than de novo synthesis. The sequence is that of Adenine phosphoribosyltransferase from Corynebacterium jeikeium (strain K411).